The primary structure comprises 587 residues: Chaperonin CPN60, mitochondrial (587 aa).

Residues 1–32 (MYRLISSIASKARVARNCTSQIGSRLSSTRNY) constitute a mitochondrion transit peptide.

It belongs to the chaperonin (HSP60) family.

Its subcellular location is the mitochondrion. Implicated in mitochondrial protein import and macromolecular assembly. May facilitate the correct folding of imported proteins. May also prevent misfolding and promote the refolding and proper assembly of unfolded polypeptides generated under stress conditions in the mitochondrial matrix. In Brassica napus (Rape), this protein is Chaperonin CPN60, mitochondrial.